Consider the following 581-residue polypeptide: Arginine--tRNA ligase (581 aa).

A 'HIGH' region motif is present at residues 126 to 136 (PNLAKEMHVGH).

It belongs to the class-I aminoacyl-tRNA synthetase family. In terms of assembly, monomer.

The protein resides in the cytoplasm. The enzyme catalyses tRNA(Arg) + L-arginine + ATP = L-arginyl-tRNA(Arg) + AMP + diphosphate. The chain is Arginine--tRNA ligase from Shewanella sediminis (strain HAW-EB3).